We begin with the raw amino-acid sequence, 179 residues long: uncharacterized protein (179 aa).

Residues 1-10 show a composition bias toward polar residues; the sequence is ATLSAGQPAS. Disordered regions lie at residues 1–35, 59–80, and 131–179; these read ATLS…RGKC, VRRN…PIVT, and ECPT…STCR. Basic residues predominate over residues 23–33; it reads LHRHPAPKRRG. Residues 149–158 show a composition bias toward basic residues; that stretch reads TPSRVRRSRR.

This is an uncharacterized protein from Human cytomegalovirus (strain AD169) (HHV-5).